We begin with the raw amino-acid sequence, 286 residues long: Nucleotide-binding protein Sfum_2066 (286 aa).

8–15 is an ATP binding site; the sequence is GLSGSGKS. 59–62 provides a ligand contact to GTP; it reads DIRE.

It belongs to the RapZ-like family.

Functionally, displays ATPase and GTPase activities. This Syntrophobacter fumaroxidans (strain DSM 10017 / MPOB) protein is Nucleotide-binding protein Sfum_2066.